Consider the following 161-residue polypeptide: Crossover junction endodeoxyribonuclease RuvC (161 aa).

Residues D7, E67, and D139 contribute to the active site. Mg(2+) contacts are provided by D7, E67, and D139.

The protein belongs to the RuvC family. Homodimer which binds Holliday junction (HJ) DNA. The HJ becomes 2-fold symmetrical on binding to RuvC with unstacked arms; it has a different conformation from HJ DNA in complex with RuvA. In the full resolvosome a probable DNA-RuvA(4)-RuvB(12)-RuvC(2) complex forms which resolves the HJ. Requires Mg(2+) as cofactor.

Its subcellular location is the cytoplasm. The enzyme catalyses Endonucleolytic cleavage at a junction such as a reciprocal single-stranded crossover between two homologous DNA duplexes (Holliday junction).. Its function is as follows. The RuvA-RuvB-RuvC complex processes Holliday junction (HJ) DNA during genetic recombination and DNA repair. Endonuclease that resolves HJ intermediates. Cleaves cruciform DNA by making single-stranded nicks across the HJ at symmetrical positions within the homologous arms, yielding a 5'-phosphate and a 3'-hydroxyl group; requires a central core of homology in the junction. The consensus cleavage sequence is 5'-(A/T)TT(C/G)-3'. Cleavage occurs on the 3'-side of the TT dinucleotide at the point of strand exchange. HJ branch migration catalyzed by RuvA-RuvB allows RuvC to scan DNA until it finds its consensus sequence, where it cleaves and resolves the cruciform DNA. The protein is Crossover junction endodeoxyribonuclease RuvC of Syntrophotalea carbinolica (strain DSM 2380 / NBRC 103641 / GraBd1) (Pelobacter carbinolicus).